The following is a 213-amino-acid chain: Large ribosomal subunit protein uL3 (213 aa).

A disordered region spans residues 131 to 155; the sequence is GRASHGNSVSHRAHGSTGNNQDPGR. Over residues 135-152 the composition is skewed to polar residues; the sequence is HGNSVSHRAHGSTGNNQD. The residue at position 151 (Gln151) is an N5-methylglutamine.

This sequence belongs to the universal ribosomal protein uL3 family. Part of the 50S ribosomal subunit. Forms a cluster with proteins L14 and L19. In terms of processing, methylated by PrmB.

Functionally, one of the primary rRNA binding proteins, it binds directly near the 3'-end of the 23S rRNA, where it nucleates assembly of the 50S subunit. The polypeptide is Large ribosomal subunit protein uL3 (Agrobacterium fabrum (strain C58 / ATCC 33970) (Agrobacterium tumefaciens (strain C58))).